A 149-amino-acid chain; its full sequence is 3-dehydroquinate dehydratase (149 aa).

Tyr26 functions as the Proton acceptor in the catalytic mechanism. Residues Asn77, His83, and Asp90 each contribute to the substrate site. The active-site Proton donor is the His103. Substrate-binding positions include 104 to 105 and Arg114; that span reads LS.

This sequence belongs to the type-II 3-dehydroquinase family. As to quaternary structure, homododecamer.

The enzyme catalyses 3-dehydroquinate = 3-dehydroshikimate + H2O. The protein operates within metabolic intermediate biosynthesis; chorismate biosynthesis; chorismate from D-erythrose 4-phosphate and phosphoenolpyruvate: step 3/7. In terms of biological role, catalyzes a trans-dehydration via an enolate intermediate. The polypeptide is 3-dehydroquinate dehydratase (Aliivibrio fischeri (strain MJ11) (Vibrio fischeri)).